Consider the following 106-residue polypeptide: NADH dehydrogenase [ubiquinone] iron-sulfur protein 5 (106 aa).

Positions 30–74 (APRCHAFEKEWIECAHGIGAIRAEKECKIEYDDFIECLLRQKTMR) constitute a CHCH domain. 2 consecutive short sequence motifs (cx9C motif) follow at residues 33 to 43 (CHAFEKEWIEC) and 56 to 66 (CKIEYDDFIEC). Cystine bridges form between Cys33-Cys66 and Cys43-Cys56. Positions 87–106 (IKEGKYTPPPHHIGKGEPRP) are disordered.

It belongs to the complex I NDUFS5 subunit family. Mammalian complex I is composed of 45 different subunits. This is a component of the iron-sulfur (IP) fragment of the enzyme.

The protein localises to the mitochondrion inner membrane. The protein resides in the mitochondrion intermembrane space. Functionally, accessory subunit of the mitochondrial membrane respiratory chain NADH dehydrogenase (Complex I), that is believed not to be involved in catalysis. Complex I functions in the transfer of electrons from NADH to the respiratory chain. The immediate electron acceptor for the enzyme is believed to be ubiquinone. The protein is NADH dehydrogenase [ubiquinone] iron-sulfur protein 5 (NDUFS5) of Macaca fascicularis (Crab-eating macaque).